The following is a 102-amino-acid chain: YcgL domain-containing protein MS1047 (102 aa).

The YcgL domain maps to 1 to 85; sequence MLCAIYKSKK…KQESLFEQFK (85 aa).

The chain is YcgL domain-containing protein MS1047 from Mannheimia succiniciproducens (strain KCTC 0769BP / MBEL55E).